Consider the following 356-residue polypeptide: CMP-sialic acid transporter 2 (356 aa).

The segment covering 1-24 has biased composition (basic and acidic residues); sequence MEYRRVKDQESYDVVSQKDIESPG. Residues 1-44 are disordered; that stretch reads MEYRRVKDQESYDVVSQKDIESPGERSLSSTSATSSLSTAGASK. Topologically, residues 1–52 are cytoplasmic; that stretch reads MEYRRVKDQESYDVVSQKDIESPGERSLSSTSATSSLSTAGASKGKNSWKLK. The segment covering 27 to 44 has biased composition (low complexity); the sequence is SLSSTSATSSLSTAGASK. The helical transmembrane segment at 53 to 73 threads the bilayer; the sequence is SIVTLALTLLTSSQAILIVWS. Residues 74–82 lie on the Lumenal side of the membrane; sequence KRAGKYEYS. Residues 83–103 traverse the membrane as a helical segment; sequence VTTANFSVEALKCLLSLIALY. At 104–125 the chain is on the cytoplasmic side; it reads RTWNSQGVTEDNRLSTSFDEVS. The chain crosses the membrane as a helical span at residues 126–146; it reads VYPIPAILYMVKNLLQYYIFA. Over 147-149 the chain is Lumenal; it reads YVD. The helical transmembrane segment at 150-172 threads the bilayer; that stretch reads APAYQILKNLNIISTGVLYRIIL. Topologically, residues 173-175 are cytoplasmic; that stretch reads KKK. A helical membrane pass occupies residues 176 to 196; that stretch reads LSEIQWAAFILLCAGCTTAQL. The Lumenal segment spans residues 197–211; it reads NPSSDHVLQTPIQGW. The helical transmembrane segment at 212 to 232 threads the bilayer; that stretch reads VMAIVMALLSGFAGVYTEAII. The Cytoplasmic segment spans residues 233–239; it reads KKRPSRN. Residues 240-260 form a helical membrane-spanning segment; it reads INVQNFWLYIFGMLFNLVAIC. Residues 261-277 lie on the Lumenal side of the membrane; the sequence is VQDFDAVMNKGFFHGYS. Residues 278 to 298 form a helical membrane-spanning segment; that stretch reads FITVLMILNHALSGIAVSMVM. Topologically, residues 299–314 are cytoplasmic; sequence KYADNIVKVYSTSVAM. Residues 315–335 traverse the membrane as a helical segment; sequence LLTAVVSVFLFGFHLSLAFFL. Residues 336-356 are Lumenal-facing; the sequence is GSTVVSVSVYLHSVGKPQPQK.

This sequence belongs to the nucleotide-sugar transporter family. CMP-Sialate:CMP antiporter (TC 2.A.7.12) subfamily. In terms of tissue distribution, expressed in roots, leaves and stalks.

Its subcellular location is the golgi apparatus membrane. Sugar transporter involved in the transport of CMP-sialic acid from the cytoplasm into the Golgi. May transport important nucleotide sugars such as CMP-Kdo (2-keto-3-deoxy-D-manno-octulosonic acid) in physiological conditions. This chain is CMP-sialic acid transporter 2, found in Oryza sativa subsp. japonica (Rice).